We begin with the raw amino-acid sequence, 423 residues long: Zinc-type alcohol dehydrogenase-like protein C1198.01 (423 aa).

Residues Lys14–Thr36 are disordered. Residues Cys74, His97, Cys127, Cys130, Cys133, and Cys141 each contribute to the Zn(2+) site.

Belongs to the zinc-containing alcohol dehydrogenase family. Class-III subfamily. The cofactor is Zn(2+).

Its subcellular location is the golgi apparatus. The polypeptide is Zinc-type alcohol dehydrogenase-like protein C1198.01 (Schizosaccharomyces pombe (strain 972 / ATCC 24843) (Fission yeast)).